The sequence spans 143 residues: MLSPKKTKFRKQFKGRIHGTSKGGTLLNFGSYGLKAVEPERITARQIEAARRAITRQMKRQGRVWIRIFPDVPVTGKPAEVRMGKGKGAVDYWAARVAPGRIMFEIDGVPDDIAREALRLGAAKLPIRTRVVTRIDAGVAQEA.

This sequence belongs to the universal ribosomal protein uL16 family. As to quaternary structure, part of the 50S ribosomal subunit.

In terms of biological role, binds 23S rRNA and is also seen to make contacts with the A and possibly P site tRNAs. The sequence is that of Large ribosomal subunit protein uL16 from Caulobacter vibrioides (strain ATCC 19089 / CIP 103742 / CB 15) (Caulobacter crescentus).